Reading from the N-terminus, the 348-residue chain is Holliday junction branch migration complex subunit RuvB (348 aa).

The large ATPase domain (RuvB-L) stretch occupies residues 1 to 182 (MRIELLNTPA…FGINSRFDYY (182 aa)). ATP contacts are provided by residues Ile21, Arg22, Gly63, Lys66, Thr67, Thr68, 129-131 (EDF), Arg172, Tyr182, and Arg219. Residue Thr67 coordinates Mg(2+). The tract at residues 183-253 (SADLLEKIII…IAMTTLDCLE (71 aa)) is small ATPAse domain (RuvB-S). Positions 256–348 (EEGLDDMDKK…EFPLEDDQRQ (93 aa)) are head domain (RuvB-H). DNA contacts are provided by Arg311 and Arg316.

The protein belongs to the RuvB family. Homohexamer. Forms an RuvA(8)-RuvB(12)-Holliday junction (HJ) complex. HJ DNA is sandwiched between 2 RuvA tetramers; dsDNA enters through RuvA and exits via RuvB. An RuvB hexamer assembles on each DNA strand where it exits the tetramer. Each RuvB hexamer is contacted by two RuvA subunits (via domain III) on 2 adjacent RuvB subunits; this complex drives branch migration. In the full resolvosome a probable DNA-RuvA(4)-RuvB(12)-RuvC(2) complex forms which resolves the HJ.

It localises to the cytoplasm. It carries out the reaction ATP + H2O = ADP + phosphate + H(+). Functionally, the RuvA-RuvB-RuvC complex processes Holliday junction (HJ) DNA during genetic recombination and DNA repair, while the RuvA-RuvB complex plays an important role in the rescue of blocked DNA replication forks via replication fork reversal (RFR). RuvA specifically binds to HJ cruciform DNA, conferring on it an open structure. The RuvB hexamer acts as an ATP-dependent pump, pulling dsDNA into and through the RuvAB complex. RuvB forms 2 homohexamers on either side of HJ DNA bound by 1 or 2 RuvA tetramers; 4 subunits per hexamer contact DNA at a time. Coordinated motions by a converter formed by DNA-disengaged RuvB subunits stimulates ATP hydrolysis and nucleotide exchange. Immobilization of the converter enables RuvB to convert the ATP-contained energy into a lever motion, pulling 2 nucleotides of DNA out of the RuvA tetramer per ATP hydrolyzed, thus driving DNA branch migration. The RuvB motors rotate together with the DNA substrate, which together with the progressing nucleotide cycle form the mechanistic basis for DNA recombination by continuous HJ branch migration. Branch migration allows RuvC to scan DNA until it finds its consensus sequence, where it cleaves and resolves cruciform DNA. The protein is Holliday junction branch migration complex subunit RuvB of Chlorobium limicola (strain DSM 245 / NBRC 103803 / 6330).